We begin with the raw amino-acid sequence, 202 residues long: Adenylyl-sulfate kinase (202 aa).

ATP is bound at residue 31 to 38 (GLSASGKS). Catalysis depends on S105, which acts as the Phosphoserine intermediate.

This sequence belongs to the APS kinase family.

The catalysed reaction is adenosine 5'-phosphosulfate + ATP = 3'-phosphoadenylyl sulfate + ADP + H(+). It functions in the pathway sulfur metabolism; hydrogen sulfide biosynthesis; sulfite from sulfate: step 2/3. Its function is as follows. Catalyzes the synthesis of activated sulfate. In Saccharomyces cerevisiae (strain ATCC 204508 / S288c) (Baker's yeast), this protein is Adenylyl-sulfate kinase (MET14).